A 322-amino-acid polypeptide reads, in one-letter code: Sideroflexin-1 (322 aa).

Ser-2 is modified (N-acetylserine). At 2 to 102 (SGELPPNINI…MSAQVPMNMT (101 aa)) the chain is on the mitochondrial matrix side. A helical membrane pass occupies residues 103–120 (ITGCMMTFYRTTPAVLFW). At 121–146 (QWVNQSFNAVVNYTNRSGDAPLTVNE) the chain is on the mitochondrial intermembrane side. Residues 147 to 167 (LGTAYVSATTGAVATALGLNA) form a helical membrane-spanning segment. The Mitochondrial matrix segment spans residues 168–174 (LTKRVSP). A helical transmembrane segment spans residues 175 to 195 (LVGRFVPFAAVAAANCINIPL). Residues 196 to 228 (MRQRELKVGIPVTDENGNRLGESASAAKQAITQ) are Mitochondrial intermembrane-facing. Residues 229–249 (VVVSRILMAAPGMAIPPFIMN) traverse the membrane as a helical segment. At 250 to 266 (TLEKKAFLKRFPWMSAP) the chain is on the mitochondrial matrix side. A helical membrane pass occupies residues 267-287 (VQVGIVGFCLVFATPLCCALF). The Mitochondrial intermembrane segment spans residues 288–322 (PQKSSMSVTSLEAELQARIRETYPELRRVYFNKGL).

Belongs to the sideroflexin family.

The protein localises to the mitochondrion inner membrane. It carries out the reaction L-serine(in) = L-serine(out). The catalysed reaction is L-alanine(in) = L-alanine(out). It catalyses the reaction L-cysteine(in) = L-cysteine(out). Amino acid transporter importing serine, an essential substrate of the mitochondrial branch of the one-carbon pathway, into mitochondria. Mitochondrial serine is then converted to glycine and formate, which exits to the cytosol where it is used to generate the charged folates that serve as one-carbon donors. May also transport other amino acids including alanine and cysteine. This is Sideroflexin-1 (SFXN1) from Ovis aries (Sheep).